The chain runs to 126 residues: Small ribosomal subunit protein uS13 (126 aa).

Residues 101–126 are disordered; the sequence is QKTKNNCRTRKGKKKTVANKKKKINK.

It belongs to the universal ribosomal protein uS13 family. As to quaternary structure, part of the 30S ribosomal subunit. Forms a loose heterodimer with protein S19. Forms two bridges to the 50S subunit in the 70S ribosome.

In terms of biological role, located at the top of the head of the 30S subunit, it contacts several helices of the 16S rRNA. In the 70S ribosome it contacts the 23S rRNA (bridge B1a) and protein L5 of the 50S subunit (bridge B1b), connecting the 2 subunits; these bridges are implicated in subunit movement. Contacts the tRNAs in the A and P-sites. This Karelsulcia muelleri (strain GWSS) (Sulcia muelleri) protein is Small ribosomal subunit protein uS13.